Here is a 326-residue protein sequence, read N- to C-terminus: Phosphate acyltransferase (326 aa).

This sequence belongs to the PlsX family. Homodimer. Probably interacts with PlsY.

Its subcellular location is the cytoplasm. The catalysed reaction is a fatty acyl-[ACP] + phosphate = an acyl phosphate + holo-[ACP]. Its pathway is lipid metabolism; phospholipid metabolism. In terms of biological role, catalyzes the reversible formation of acyl-phosphate (acyl-PO(4)) from acyl-[acyl-carrier-protein] (acyl-ACP). This enzyme utilizes acyl-ACP as fatty acyl donor, but not acyl-CoA. The polypeptide is Phosphate acyltransferase (Thermus thermophilus (strain ATCC BAA-163 / DSM 7039 / HB27)).